We begin with the raw amino-acid sequence, 253 residues long: Ditrans,polycis-undecaprenyl-diphosphate synthase ((2E,6E)-farnesyl-diphosphate specific) (253 aa).

Asp25 is a catalytic residue. Asp25 provides a ligand contact to Mg(2+). Residues 26–29 (GNGR), Trp30, Arg38, His42, and 70–72 (SSE) contribute to the substrate site. The active-site Proton acceptor is the Asn73. Residues Trp74, Arg76, and Arg193 each contribute to the substrate site. Residue His198 participates in Mg(2+) binding. 199 to 201 (RIS) serves as a coordination point for substrate. Glu212 serves as a coordination point for Mg(2+).

It belongs to the UPP synthase family. In terms of assembly, homodimer. It depends on Mg(2+) as a cofactor.

The enzyme catalyses 8 isopentenyl diphosphate + (2E,6E)-farnesyl diphosphate = di-trans,octa-cis-undecaprenyl diphosphate + 8 diphosphate. Its function is as follows. Catalyzes the sequential condensation of isopentenyl diphosphate (IPP) with (2E,6E)-farnesyl diphosphate (E,E-FPP) to yield (2Z,6Z,10Z,14Z,18Z,22Z,26Z,30Z,34E,38E)-undecaprenyl diphosphate (di-trans,octa-cis-UPP). UPP is the precursor of glycosyl carrier lipid in the biosynthesis of bacterial cell wall polysaccharide components such as peptidoglycan and lipopolysaccharide. This chain is Ditrans,polycis-undecaprenyl-diphosphate synthase ((2E,6E)-farnesyl-diphosphate specific), found in Pectobacterium atrosepticum (strain SCRI 1043 / ATCC BAA-672) (Erwinia carotovora subsp. atroseptica).